We begin with the raw amino-acid sequence, 364 residues long: Ribosomal RNA large subunit methyltransferase M (364 aa).

S-adenosyl-L-methionine-binding positions include Ser-194, 227–230 (CPGG), Asp-246, Asp-266, and Asp-284. Lys-313 acts as the Proton acceptor in catalysis.

It belongs to the class I-like SAM-binding methyltransferase superfamily. RNA methyltransferase RlmE family. RlmM subfamily. In terms of assembly, monomer.

It localises to the cytoplasm. It catalyses the reaction cytidine(2498) in 23S rRNA + S-adenosyl-L-methionine = 2'-O-methylcytidine(2498) in 23S rRNA + S-adenosyl-L-homocysteine + H(+). In terms of biological role, catalyzes the 2'-O-methylation at nucleotide C2498 in 23S rRNA. This is Ribosomal RNA large subunit methyltransferase M from Actinobacillus succinogenes (strain ATCC 55618 / DSM 22257 / CCUG 43843 / 130Z).